A 433-amino-acid polypeptide reads, in one-letter code: UDP-N-acetylglucosamine 1-carboxyvinyltransferase (433 aa).

22–23 (KN) is a binding site for phosphoenolpyruvate. Residue arginine 96 participates in UDP-N-acetyl-alpha-D-glucosamine binding. The Proton donor role is filled by cysteine 120. The residue at position 120 (cysteine 120) is a 2-(S-cysteinyl)pyruvic acid O-phosphothioketal. UDP-N-acetyl-alpha-D-glucosamine is bound by residues 125–129 (RPIDL), aspartate 308, and isoleucine 330.

It belongs to the EPSP synthase family. MurA subfamily.

The protein resides in the cytoplasm. It catalyses the reaction phosphoenolpyruvate + UDP-N-acetyl-alpha-D-glucosamine = UDP-N-acetyl-3-O-(1-carboxyvinyl)-alpha-D-glucosamine + phosphate. Its pathway is cell wall biogenesis; peptidoglycan biosynthesis. Cell wall formation. Adds enolpyruvyl to UDP-N-acetylglucosamine. The polypeptide is UDP-N-acetylglucosamine 1-carboxyvinyltransferase (Koribacter versatilis (strain Ellin345)).